The primary structure comprises 340 residues: Putative Ig-like domain-containing protein C1 (340 aa).

Positions 207 to 294 (PTVTVTGIER…SSPRVMVPTI (88 aa)) constitute an Ig-like domain.

This Sus scrofa (Pig) protein is Putative Ig-like domain-containing protein C1.